The following is a 443-amino-acid chain: Tol-Pal system protein TolB (443 aa).

Residues 1–33 form the signal peptide; sequence MKIGIINTKIRTVFSAFACMIAASLVCTMPARA.

It belongs to the TolB family. In terms of assembly, the Tol-Pal system is composed of five core proteins: the inner membrane proteins TolA, TolQ and TolR, the periplasmic protein TolB and the outer membrane protein Pal. They form a network linking the inner and outer membranes and the peptidoglycan layer.

The protein localises to the periplasm. Its function is as follows. Part of the Tol-Pal system, which plays a role in outer membrane invagination during cell division and is important for maintaining outer membrane integrity. The protein is Tol-Pal system protein TolB of Brucella ovis (strain ATCC 25840 / 63/290 / NCTC 10512).